The following is a 410-amino-acid chain: Neurotensin receptor type 2 (410 aa).

The Extracellular segment spans residues 1 to 32 (METSSPRPPRPSSNPGLSLDARLGVDTRLWAK). Residues 33 to 55 (VLFTALYALIWALGAAGNALSAH) traverse the membrane as a helical segment. Residues 56–64 (VVLKARAGR) lie on the Cytoplasmic side of the membrane. The helical transmembrane segment at 65 to 87 (AGRLRHHVLSLALAGLLLLLVGV) threads the bilayer. Residues 88 to 109 (PVELYSFVWFHYPWVFGDLGCR) lie on the Extracellular side of the membrane. A disulfide bridge connects residues C108 and C194. A helical transmembrane segment spans residues 110–131 (GYYFVHELCAYATVLSVAGLSA). The Cytoplasmic segment spans residues 132 to 154 (ERCLAVCQPLRARSLLTPRRTRW). A helical transmembrane segment spans residues 155-176 (LVALSWAASLGLALPMAVIMGQ). Residues 177-217 (KHELETADGEPEPASRVCTVLVSRTALQVFIQVNVLVSFVL) are Extracellular-facing. Residues 218 to 237 (PLALTAFLNGVTVSHLLALC) traverse the membrane as a helical segment. Over 238 to 297 (SQVPSTSTPGSSTPSRLELLSEEGLLSFIVWKKTFIQGGQVSLVRHKDVRRIRSLQRSVQ) the chain is Cytoplasmic. The chain crosses the membrane as a helical span at residues 298 to 318 (VLRAIVVMYVICWLPYHARRL). Topologically, residues 319-337 (MYCYVPDDAWTDPLYNFYH) are extracellular. A helical membrane pass occupies residues 338-358 (YFYMVTNTLFYVSSAVTPLLY). Residues 359–410 (NAVSSSFRKLFLEAVSSLCGEHHPMKRLPPKPQSPTLMDTASGFGDPPETRT) are Cytoplasmic-facing. C377 carries the S-palmitoyl cysteine lipid modification. A disordered region spans residues 381-410 (HPMKRLPPKPQSPTLMDTASGFGDPPETRT).

It belongs to the G-protein coupled receptor 1 family. Neurotensin receptor subfamily. NTSR2 sub-subfamily. In terms of tissue distribution, expressed in prostate (at protein level).

It is found in the cell membrane. In terms of biological role, receptor for the tridecapeptide neurotensin. It is associated with G proteins that activate a phosphatidylinositol-calcium second messenger system. The sequence is that of Neurotensin receptor type 2 (NTSR2) from Homo sapiens (Human).